A 216-amino-acid chain; its full sequence is Vascular endothelial growth factor A (216 aa).

The N-terminal stretch at 1 to 26 is a signal peptide; sequence MNFLLTWIHWGLAALLYLQSAELSKA. 3 cysteine pairs are disulfide-bonded: C52/C94, C83/C128, and C87/C130. Residue N101 is glycosylated (N-linked (GlcNAc...) asparagine). A compositionally biased stretch (basic and acidic residues) spans 132–141; that stretch reads PKKDVKNKQE. Positions 132–167 are disordered; that stretch reads PKKDVKNKQEKKSKRGKGKGQKRKRKKGRYKPPSFH. Residues 142–161 show a composition bias toward basic residues; that stretch reads KKSKRGKGKGQKRKRKKGRY.

It belongs to the PDGF/VEGF growth factor family. As to quaternary structure, homodimer; disulfide-linked. Also found as heterodimer with PGF.

Its function is as follows. Growth factor active in angiogenesis, vasculogenesis and endothelial cell growth. Induces endothelial cell proliferation, promotes cell migration, inhibits apoptosis and induces permeabilization of blood vessels. Binds to the FLT1/VEGFR1 and KDR/VEGFR2 receptors, heparan sulfate and heparin. The protein is Vascular endothelial growth factor A (VEGFA) of Gallus gallus (Chicken).